The sequence spans 43 residues: Potassium channel toxin gamma-KTx 4.11 (43 aa).

Disulfide bonds link cysteine 5-cysteine 23, cysteine 11-cysteine 34, cysteine 20-cysteine 39, and cysteine 24-cysteine 41.

Belongs to the ergtoxin family. Gamma-KTx 4 subfamily. As to expression, expressed by the venom gland.

The protein resides in the secreted. Its function is as follows. Reversibly blocks Kv11/ERG potassium channels. The sequence is that of Potassium channel toxin gamma-KTx 4.11 from Centruroides noxius (Mexican scorpion).